The primary structure comprises 119 residues: Large ribosomal subunit protein uL18 (119 aa).

Belongs to the universal ribosomal protein uL18 family. As to quaternary structure, part of the 50S ribosomal subunit; part of the 5S rRNA/L5/L18/L25 subcomplex. Contacts the 5S and 23S rRNAs.

This is one of the proteins that bind and probably mediate the attachment of the 5S RNA into the large ribosomal subunit, where it forms part of the central protuberance. The chain is Large ribosomal subunit protein uL18 from Jannaschia sp. (strain CCS1).